The following is a 303-amino-acid chain: tRNA pseudouridine synthase A (303 aa).

The active-site Nucleophile is Asp59. Substrate is bound at residue Tyr128.

The protein belongs to the tRNA pseudouridine synthase TruA family. Homodimer.

It catalyses the reaction uridine(38/39/40) in tRNA = pseudouridine(38/39/40) in tRNA. Formation of pseudouridine at positions 38, 39 and 40 in the anticodon stem and loop of transfer RNAs. The sequence is that of tRNA pseudouridine synthase A from Bifidobacterium longum (strain DJO10A).